Consider the following 259-residue polypeptide: Type III pantothenate kinase (259 aa).

Asp-6–Leu-13 is an ATP binding site. Residue Gly-108–Arg-111 participates in substrate binding. Residue Asp-110 is the Proton acceptor of the active site. Asp-130 is a K(+) binding site. Residue Thr-133 participates in ATP binding. Thr-185 provides a ligand contact to substrate.

Belongs to the type III pantothenate kinase family. Homodimer. Requires NH4(+) as cofactor. K(+) serves as cofactor.

The protein localises to the cytoplasm. The catalysed reaction is (R)-pantothenate + ATP = (R)-4'-phosphopantothenate + ADP + H(+). Its pathway is cofactor biosynthesis; coenzyme A biosynthesis; CoA from (R)-pantothenate: step 1/5. In terms of biological role, catalyzes the phosphorylation of pantothenate (Pan), the first step in CoA biosynthesis. The sequence is that of Type III pantothenate kinase from Maricaulis maris (strain MCS10) (Caulobacter maris).